A 269-amino-acid polypeptide reads, in one-letter code: Ribosomal RNA small subunit methyltransferase J (269 aa).

S-adenosyl-L-methionine-binding positions include 125–126 (ER) and Asp179.

Belongs to the methyltransferase superfamily. RsmJ family.

The protein resides in the cytoplasm. It catalyses the reaction guanosine(1516) in 16S rRNA + S-adenosyl-L-methionine = N(2)-methylguanosine(1516) in 16S rRNA + S-adenosyl-L-homocysteine + H(+). Functionally, specifically methylates the guanosine in position 1516 of 16S rRNA. The protein is Ribosomal RNA small subunit methyltransferase J of Pseudomonas syringae pv. syringae (strain B728a).